The following is a 249-amino-acid chain: tRNA pseudouridine synthase A (249 aa).

The active-site Nucleophile is D53. Y111 contacts substrate.

The protein belongs to the tRNA pseudouridine synthase TruA family. Homodimer.

The catalysed reaction is uridine(38/39/40) in tRNA = pseudouridine(38/39/40) in tRNA. Functionally, formation of pseudouridine at positions 38, 39 and 40 in the anticodon stem and loop of transfer RNAs. The chain is tRNA pseudouridine synthase A from Streptococcus pneumoniae (strain 70585).